Reading from the N-terminus, the 176-residue chain is HTH-type transcriptional regulator DctR (176 aa).

Positions 109–174 constitute an HTH luxR-type domain; sequence VPEANVSLSR…ELVRHQHIDY (66 aa). Residues 133-152 constitute a DNA-binding region (H-T-H motif); the sequence is TEDILEKLKISLKTFYCHKH.

In terms of biological role, may act as a transcriptional regulator of dctA. Could be involved in the regulation of the genes coding for the type III secretion system in enterohaemorragic strains. This chain is HTH-type transcriptional regulator DctR (dctR), found in Escherichia coli O157:H7.